Reading from the N-terminus, the 480-residue chain is uncharacterized protein (480 aa).

Positions 1–21 (MSRYFSFFFLALFLHYRIIVA) are cleaved as a signal peptide. Disordered stretches follow at residues 38–72 (SSHL…SAEC) and 116–147 (SPLI…NDQT). Positions 51-60 (LTQSHSSLSD) are enriched in low complexity. The segment covering 133–144 (LKTSSEAQGDTN) has biased composition (polar residues). Residues 153–173 (YAVEIACVCFLIALAINYFVG) traverse the membrane as a helical segment. The interval 404–480 (QARNKTESGR…VPKMKMSRSH (77 aa)) is disordered. The span at 407 to 465 (NKTESGRQKAAEEAYKELHNARQEALQKKKAEKKKMMEEAEAKMSAEVIRKKEAKERAR) shows a compositional bias: basic and acidic residues. Positions 411-467 (SGRQKAAEEAYKELHNARQEALQKKKAEKKKMMEEAEAKMSAEVIRKKEAKERARQV) form a coiled coil. Positions 466–480 (QVKKAVPKMKMSRSH) are enriched in basic residues.

The protein localises to the membrane. This is an uncharacterized protein from Arabidopsis thaliana (Mouse-ear cress).